A 490-amino-acid polypeptide reads, in one-letter code: Betaine aldehyde dehydrogenase (490 aa).

I27 and D93 together coordinate K(+). Position 150-152 (150-152) interacts with NAD(+); sequence GAW. The active-site Charge relay system is the K162. 176 to 179 lines the NAD(+) pocket; the sequence is KPSE. V180 serves as a coordination point for K(+). 230–233 provides a ligand contact to NAD(+); it reads GTTT. L246 lines the K(+) pocket. The active-site Proton acceptor is E252. Positions 254, 286, and 387 each coordinate NAD(+). The active-site Nucleophile is C286. Cysteine sulfenic acid (-SOH) is present on C286. K(+) contacts are provided by K457 and G460. The Charge relay system role is filled by E464.

The protein belongs to the aldehyde dehydrogenase family. As to quaternary structure, dimer of dimers. K(+) is required as a cofactor.

The enzyme catalyses betaine aldehyde + NAD(+) + H2O = glycine betaine + NADH + 2 H(+). It participates in amine and polyamine biosynthesis; betaine biosynthesis via choline pathway; betaine from betaine aldehyde: step 1/1. Functionally, involved in the biosynthesis of the osmoprotectant glycine betaine. Catalyzes the irreversible oxidation of betaine aldehyde to the corresponding acid. This is Betaine aldehyde dehydrogenase from Pseudomonas putida (strain ATCC 700007 / DSM 6899 / JCM 31910 / BCRC 17059 / LMG 24140 / F1).